A 306-amino-acid chain; its full sequence is 4-hydroxy-3-methylbut-2-enyl diphosphate reductase 1 (306 aa).

Cysteine 10 provides a ligand contact to [4Fe-4S] cluster. The (2E)-4-hydroxy-3-methylbut-2-enyl diphosphate site is built by histidine 39 and histidine 72. Residues histidine 39 and histidine 72 each contribute to the dimethylallyl diphosphate site. Isopentenyl diphosphate-binding residues include histidine 39 and histidine 72. Residue cysteine 94 participates in [4Fe-4S] cluster binding. A (2E)-4-hydroxy-3-methylbut-2-enyl diphosphate-binding site is contributed by histidine 122. Histidine 122 contributes to the dimethylallyl diphosphate binding site. Histidine 122 provides a ligand contact to isopentenyl diphosphate. Glutamate 124 (proton donor) is an active-site residue. Threonine 162 serves as a coordination point for (2E)-4-hydroxy-3-methylbut-2-enyl diphosphate. Cysteine 192 lines the [4Fe-4S] cluster pocket. The (2E)-4-hydroxy-3-methylbut-2-enyl diphosphate site is built by serine 220, serine 221, asparagine 222, and serine 264. Dimethylallyl diphosphate-binding residues include serine 220, serine 221, asparagine 222, and serine 264. Serine 220, serine 221, asparagine 222, and serine 264 together coordinate isopentenyl diphosphate.

Belongs to the IspH family. [4Fe-4S] cluster serves as cofactor.

It carries out the reaction isopentenyl diphosphate + 2 oxidized [2Fe-2S]-[ferredoxin] + H2O = (2E)-4-hydroxy-3-methylbut-2-enyl diphosphate + 2 reduced [2Fe-2S]-[ferredoxin] + 2 H(+). It catalyses the reaction dimethylallyl diphosphate + 2 oxidized [2Fe-2S]-[ferredoxin] + H2O = (2E)-4-hydroxy-3-methylbut-2-enyl diphosphate + 2 reduced [2Fe-2S]-[ferredoxin] + 2 H(+). It participates in isoprenoid biosynthesis; dimethylallyl diphosphate biosynthesis; dimethylallyl diphosphate from (2E)-4-hydroxy-3-methylbutenyl diphosphate: step 1/1. It functions in the pathway isoprenoid biosynthesis; isopentenyl diphosphate biosynthesis via DXP pathway; isopentenyl diphosphate from 1-deoxy-D-xylulose 5-phosphate: step 6/6. Catalyzes the conversion of 1-hydroxy-2-methyl-2-(E)-butenyl 4-diphosphate (HMBPP) into a mixture of isopentenyl diphosphate (IPP) and dimethylallyl diphosphate (DMAPP). Acts in the terminal step of the DOXP/MEP pathway for isoprenoid precursor biosynthesis. The chain is 4-hydroxy-3-methylbut-2-enyl diphosphate reductase 1 from Rhodopseudomonas palustris (strain ATCC BAA-98 / CGA009).